The following is a 190-amino-acid chain: Cytoglobin (190 aa).

Residues methionine 1–glutamate 21 form a disordered region. In terms of domain architecture, Globin spans glutamate 18–lysine 167. A disulfide bond links cysteine 38 and cysteine 83. Positions 81 and 113 each coordinate heme b.

It belongs to the globin family. In terms of assembly, monomeric. Homodimer; disulfide-linked in vitro. Also homooligomeric in vitro. In terms of processing, the formation of an intramolecular disulfide bond between cysteines Cys-38 and Cys-83 specifically enhances the nitrite reductase activity. In terms of tissue distribution, widely expressed (at protein level).

It is found in the cytoplasm. It localises to the nucleus. The enzyme catalyses Fe(II)-heme b-[protein] + nitric oxide + O2 = Fe(III)-heme b-[protein] + nitrate. The catalysed reaction is Fe(III)-heme b-[protein] + nitric oxide + H2O = Fe(II)-heme b-[protein] + nitrite + 2 H(+). It catalyses the reaction 2 superoxide + 2 H(+) = H2O2 + O2. It carries out the reaction H2O2 + AH2 = A + 2 H2O. Its activity is regulated as follows. The nitric oxide dioxygenase activity is activated by a reducing system composed of cytochrome b5, its upstream reductase CYB5R3 and NADH. Functionally, probable multifunctional globin with a hexacoordinated heme iron required for the catalysis of various reactions depending on redox condition of the cell as well as oxygen availability. Has a nitric oxide dioxygenase (NOD) activity and is most probably involved in cell-mediated and oxygen-dependent nitric oxide consumption. By scavenging this second messenger may regulate several biological processes including endothelium-mediated vasodilation and vascular tone. Under normoxic conditions functions as a nitric oxide dioxygenase (NOD) but under hypoxic conditions the globin may switch its function to that of a nitrite (NO2) reductase (NiR), generating nitric oxide. Could also have peroxidase and superoxide dismutase activities, detoxifying reactive oxygen species and protecting cells against oxidative stress. Also binds dioxygen with low affinity and could function as an oxygen sensor but has probably no function as a respiratory oxygen carrier. This is Cytoglobin from Rattus norvegicus (Rat).